We begin with the raw amino-acid sequence, 325 residues long: Probable cell division protein WhiA (325 aa).

The segment at residues 280-313 (SLKELGSMLKNPLGKSGVNHRLRKIDKIAEELRK) is a DNA-binding region (H-T-H motif).

Belongs to the WhiA family.

Involved in cell division and chromosome segregation. This Caldicellulosiruptor saccharolyticus (strain ATCC 43494 / DSM 8903 / Tp8T 6331) protein is Probable cell division protein WhiA.